A 450-amino-acid polypeptide reads, in one-letter code: FERM domain-containing protein 8 (450 aa).

One can recognise an FERM domain in the interval methionine 28–glutamate 373.

It is found in the cytoplasm. Its subcellular location is the cytosol. The protein localises to the cell membrane. Promotes the cell surface stability of RHBDF1 and RHBDF2 and prevents their degradation via the endolysosomal pathway. By acting on RHBDF proteins, involved in ADAM17-mediated ligand shedding. May negatively regulate Wnt signaling. The chain is FERM domain-containing protein 8 (frmd8) from Xenopus tropicalis (Western clawed frog).